Consider the following 181-residue polypeptide: Protein Syd (181 aa).

Belongs to the Syd family.

The protein resides in the cell inner membrane. Interacts with the SecY protein in vivo. May bind preferentially to an uncomplexed state of SecY, thus functioning either as a chelating agent for excess SecY in the cell or as a regulatory factor that negatively controls the translocase function. This Shigella flexneri serotype 5b (strain 8401) protein is Protein Syd.